The following is a 499-amino-acid chain: Lysine--tRNA ligase (499 aa).

Mg(2+) is bound by residues Glu408 and Glu415.

This sequence belongs to the class-II aminoacyl-tRNA synthetase family. Homodimer. The cofactor is Mg(2+).

It localises to the cytoplasm. It catalyses the reaction tRNA(Lys) + L-lysine + ATP = L-lysyl-tRNA(Lys) + AMP + diphosphate. This Bacillus cereus (strain G9842) protein is Lysine--tRNA ligase.